We begin with the raw amino-acid sequence, 309 residues long: Probable pathogenesis-related protein ARB_02861 (309 aa).

The signal sequence occupies residues 1–17 (MKSSVLMTALCVAGSLA). Positions 47–59 (CPTVIPTTSYKPE) are enriched in low complexity. The interval 47–152 (CPTVIPTTSY…PPPPGKDYKE (106 aa)) is disordered. 2 stretches are compositionally biased toward pro residues: residues 61-92 (TSKP…PCPE) and 99-147 (APPP…PPPG). The region spanning 154–284 (AGYHHNVHRS…GDAYYTVCNY (131 aa)) is the SCP domain. N-linked (GlcNAc...) asparagine glycosylation is present at asparagine 164.

It belongs to the CRISP family.

The protein localises to the secreted. Its function is as follows. Secreted protein required for efficient export of lipids such as acetylated sterols. Acts in detoxification of hydrophobic compounds. This Arthroderma benhamiae (strain ATCC MYA-4681 / CBS 112371) (Trichophyton mentagrophytes) protein is Probable pathogenesis-related protein ARB_02861.